The sequence spans 204 residues: Ribosome maturation factor RimP (204 aa).

Belongs to the RimP family.

It localises to the cytoplasm. Required for maturation of 30S ribosomal subunits. The protein is Ribosome maturation factor RimP of Allorhizobium ampelinum (strain ATCC BAA-846 / DSM 112012 / S4) (Agrobacterium vitis (strain S4)).